The chain runs to 183 residues: Putative 3-methyladenine DNA glycosylase (183 aa).

Belongs to the DNA glycosylase MPG family.

This Legionella pneumophila (strain Lens) protein is Putative 3-methyladenine DNA glycosylase.